The primary structure comprises 234 residues: PHD finger protein ING1 (234 aa).

Positions 129-166 (NNGKAGNAGEGGRGGRKKTRLATAASTAAASTGMTSSN) are disordered. A compositionally biased stretch (low complexity) spans 149–165 (LATAASTAAASTGMTSS). Residues 178-227 (PTYCICNQVSFGEMVACDNNACKIEWFHFGCVGLKEQPKGKWYCPECATV) form a PHD-type zinc finger. Residues cysteine 181, cysteine 183, cysteine 194, cysteine 199, histidine 205, cysteine 208, cysteine 221, and cysteine 224 each contribute to the Zn(2+) site.

This sequence belongs to the ING family. As to quaternary structure, interacts with H3K4me3 and to a lesser extent with H3K4me2. Ubiquitously expressed.

Its subcellular location is the nucleus. In terms of biological role, histone-binding component that specifically recognizes H3 tails trimethylated on 'Lys-4' (H3K4me3), which mark transcription start sites of virtually all active genes. This chain is PHD finger protein ING1 (ING1), found in Arabidopsis thaliana (Mouse-ear cress).